The chain runs to 258 residues: MREEKFYSVRMRASKNGSHEVGGKHLSGGERLTTYENMIHTVNALLEKGIYHSRGKPDFMKIQFECIDEPIQLVNPLHIETHEVESAEKGQVLARKLLEKAGIQKKMIDLAYEQIPECSGLRGAILFDIHSGKRIDQRKERGVRVSRMDWPDTNFDKWTKCYQMPRNSRIKEALVLATKVSEHPATIAELCWSDDPDYITGYVASKKLGYQRITKLKEYGNESGCRIFFVDGLRDLETYIDYLEKQPVFIQWEEENDA.

Belongs to the BioW family. In terms of assembly, homodimer. It depends on Mg(2+) as a cofactor.

The catalysed reaction is heptanedioate + ATP + CoA = 6-carboxyhexanoyl-CoA + AMP + diphosphate. It participates in metabolic intermediate metabolism; pimeloyl-CoA biosynthesis; pimeloyl-CoA from pimelate: step 1/1. Catalyzes the transformation of pimelate into pimeloyl-CoA with concomitant hydrolysis of ATP to AMP. This Bacillus atrophaeus (strain 1942) protein is 6-carboxyhexanoate--CoA ligase.